Reading from the N-terminus, the 363-residue chain is MAHVLQKPKHSGTHSIVQEFQVPDYVPWQQSKQETKPSTLPPVQQANSLHTSKMKTLTRVQPVFHFKPTTVVTSCQPKNPRELHRRRKLDPGKMHAKIWLMKTSLRSGRAALRELRSRENFLSKLNRELIETIQEMENSTTLHVRALLQQQDTLATIIDILEYSNKKRLQQLKSELQEWEEKKKCKMSYLEQQAEQLNAKIEKTQEEVNFLSTYMDHEYSIKSVQISTLMRQLQQVKDSQQDELDDLGEMRRKVLESLSDKIQKKKKKILSSVVAETQRPYEEALLQKMWESQDFLKCMQRFREIIDQFEENMPVLRAEVEELQAQTREPREVIFEDVLLRRPKCTPDMDVILNIPVEEPLPF.

Positions 109–329 form a coiled coil; that stretch reads RAALRELRSR…VEELQAQTRE (221 aa).

This is an uncharacterized protein from Homo sapiens (Human).